Reading from the N-terminus, the 1500-residue chain is Carbamoyl-phosphate synthase [ammonia], mitochondrial (1500 aa).

The transit peptide at 1 to 38 directs the protein to the mitochondrion; sequence MTRILTACKVVKTLKSGFGFANVTTKRQWDFSRPGIRL. Residues 39–218 form an anthranilate phosphoribosyltransferase homolog region; sequence LSVKAKTAHI…VKVFGKGNPT (180 aa). 4 positions are modified to N6-acetyllysine; alternate: lysine 44, lysine 55, lysine 57, and lysine 119. N6-succinyllysine; alternate is present on residues lysine 44, lysine 55, lysine 57, and lysine 119. Lysine 55 is modified (N6-glutaryllysine; alternate). Serine 148 is subject to Phosphoserine. Lysine 157 and lysine 171 each carry N6-acetyllysine; alternate. Position 157 is an N6-succinyllysine; alternate (lysine 157). Position 171 is an N6-glutaryllysine; alternate (lysine 171). Lysine 176 is subject to N6-glutaryllysine. Lysine 182 bears the N6-acetyllysine mark. Serine 189 is modified (phosphoserine). Lysine 197 carries the post-translational modification N6-acetyllysine. 5 positions are modified to N6-acetyllysine; alternate: lysine 207, lysine 210, lysine 214, lysine 219, and lysine 228. Lysine 207 bears the N6-succinyllysine; alternate mark. Residues lysine 207, lysine 210, lysine 214, lysine 219, and lysine 228 each carry the N6-glutaryllysine; alternate modification. Lysine 214 carries the N6-succinyllysine; alternate modification. The region spanning 219–404 is the Glutamine amidotransferase type-1 domain; that stretch reads KVVAVDCGIK…FSLIKKGKGT (186 aa). Lysine 237 is modified (N6-glutaryllysine). The residue at position 279 (lysine 279) is an N6-acetyllysine. Lysine 280, lysine 287, lysine 307, and lysine 310 each carry N6-acetyllysine; alternate. The residue at position 280 (lysine 280) is an N6-glutaryllysine; alternate. An N6-succinyllysine; alternate mark is found at lysine 287 and lysine 307. N6-glutaryllysine; alternate occurs at positions 307 and 310. Lysine 400 is modified (N6-succinyllysine). An N6-succinyllysine; alternate mark is found at lysine 402 and lysine 412. Lysine 402, lysine 412, lysine 453, and lysine 458 each carry N6-glutaryllysine; alternate. Residues lysine 412, lysine 453, lysine 458, lysine 522, lysine 527, and lysine 532 each carry the N6-acetyllysine; alternate modification. An N6-succinyllysine; alternate mark is found at lysine 458, lysine 522, and lysine 527. An N6-glutaryllysine; alternate mark is found at lysine 527 and lysine 532. Phosphoserine; alternate is present on serine 537. A glycan (O-linked (GlcNAc) serine; alternate) is linked at serine 537. At serine 540 the chain carries Phosphoserine. Residues 551–743 enclose the ATP-grasp 1 domain; that stretch reads SDKLNEINEK…LAFIAAKIAL (193 aa). Residues lysine 553 and lysine 560 each carry the N6-acetyllysine; alternate modification. 2 positions are modified to N6-succinyllysine; alternate: lysine 553 and lysine 560. Lysine 553 is subject to N6-glutaryllysine; alternate. Serine 569 bears the Phosphoserine mark. Lysine 575, lysine 603, and lysine 612 each carry N6-acetyllysine; alternate. N6-succinyllysine; alternate is present on residues lysine 575, lysine 603, and lysine 612. Lysine 630 bears the N6-acetyllysine mark. Lysine 728 is subject to N6-glutaryllysine. N6-acetyllysine; alternate occurs at positions 751, 757, 772, 793, 811, 831, 840, 841, 856, 875, 889, and 892. N6-succinyllysine; alternate is present on residues lysine 751 and lysine 757. Lysine 757, lysine 772, lysine 793, and lysine 811 each carry N6-glutaryllysine; alternate. Residue lysine 793 is modified to N6-succinyllysine; alternate. Lysine 831 and lysine 840 each carry N6-succinyllysine; alternate. 5 positions are modified to N6-glutaryllysine; alternate: lysine 841, lysine 856, lysine 875, lysine 889, and lysine 892. 3 positions are modified to N6-succinyllysine; alternate: lysine 875, lysine 889, and lysine 892. Phosphoserine is present on residues serine 896 and serine 898. An N6-acetyllysine; alternate mark is found at lysine 908, lysine 915, and lysine 919. 3 positions are modified to N6-glutaryllysine; alternate: lysine 908, lysine 915, and lysine 919. Lysine 915 and lysine 919 each carry N6-succinyllysine; alternate. An N6-acetyllysine modification is found at lysine 935. Serine 1036 is subject to Phosphoserine. An N6-acetyllysine; alternate modification is found at lysine 1074. The residue at position 1074 (lysine 1074) is an N6-succinyllysine; alternate. Lysine 1074 is modified (N6-glutaryllysine; alternate). Residues serine 1079, serine 1090, and serine 1093 each carry the phosphoserine modification. Residues 1093–1284 form the ATP-grasp 2 domain; it reads SAVLDELKVA…FIDVATKVMI (192 aa). Residue lysine 1100 is modified to N6-acetyllysine; alternate. N6-succinyllysine; alternate is present on lysine 1100. Lysine 1149 carries the post-translational modification N6-succinyllysine. An N6-acetyllysine; alternate mark is found at lysine 1168 and lysine 1183. Residues lysine 1168 and lysine 1183 each carry the N6-succinyllysine; alternate modification. Lysine 1168 and lysine 1183 each carry N6-glutaryllysine; alternate. The residue at position 1203 (serine 1203) is a Phosphoserine. Residue lysine 1222 is modified to N6-acetyllysine. Lysine 1224 bears the N6-glutaryllysine mark. N6-acetyllysine; alternate is present on residues lysine 1232, lysine 1269, and lysine 1291. Residues lysine 1232, lysine 1269, and lysine 1291 each carry the N6-succinyllysine; alternate modification. Serine 1331 carries an O-linked (GlcNAc) serine glycan. A glycan (O-linked (GlcNAc) threonine) is linked at threonine 1332. Residues 1355-1500 enclose the MGS-like domain; that stretch reads FKIPQKGILI…YRQYSAGKAA (146 aa). Lysine 1356 carries the N6-acetyllysine; alternate modification. An N6-succinyllysine; alternate mark is found at lysine 1356 and lysine 1360. N6-glutaryllysine; alternate is present on residues lysine 1356 and lysine 1360. N-acetyl-L-glutamate contacts are provided by threonine 1391, threonine 1394, and tryptophan 1410. A phosphoserine mark is found at serine 1419 and serine 1431. N-acetyl-L-glutamate-binding residues include asparagine 1437 and asparagine 1440. Lysine 1444 is subject to N6-acetyllysine; alternate. N6-succinyllysine; alternate is present on lysine 1444. Asparagine 1449 serves as a coordination point for N-acetyl-L-glutamate. Lysine 1471, lysine 1479, and lysine 1486 each carry N6-acetyllysine; alternate. 3 positions are modified to N6-succinyllysine; alternate: lysine 1471, lysine 1479, and lysine 1486. An N6-glutaryllysine; alternate mark is found at lysine 1479 and lysine 1486.

As to quaternary structure, can form homooligomers (monomers as predominant form and dimers). In terms of assembly, (Microbial infection) Interacts with P.berghei (ANKA strain) phospholipid scramblase PLSCR; the interaction is involved in the interaction between parasite sporozoites and host hepatocytes. Undergoes proteolytic cleavage in the C-terminal region corresponding to the loss of approximately 12 AA residues from the C-terminus. In terms of processing, acetylation of Lys-287, Lys-603, Lys-841 and Lys-1291 is observed in liver mitochondria from fasted mice but not from fed mice. Post-translationally, succinylated at Lys-44, Lys-287 and Lys-1291. Desuccinylated at Lys-1291 by SIRT5, leading to activation. Glutarylated. Glutarylation levels increase during fasting. Deglutarylated by SIRT5 at Lys-55, Lys-219, Lys-412, Lys-889, Lys-892, Lys-915, Lys-1360 and Lys-1486, leading to activation. In terms of tissue distribution, expressed in hepatocytes (at protein level).

It is found in the mitochondrion. Its subcellular location is the nucleus. The protein localises to the nucleolus. The protein resides in the cell membrane. The enzyme catalyses hydrogencarbonate + NH4(+) + 2 ATP = carbamoyl phosphate + 2 ADP + phosphate + 2 H(+). Its activity is regulated as follows. Requires N-acetyl-L-glutamate (NAG) as an allosteric activator. In terms of biological role, involved in the urea cycle of ureotelic animals where the enzyme plays an important role in removing excess ammonia from the cell. The chain is Carbamoyl-phosphate synthase [ammonia], mitochondrial (Cps1) from Mus musculus (Mouse).